We begin with the raw amino-acid sequence, 406 residues long: Multifunctional CCA protein (406 aa).

ATP is bound by residues glycine 8 and arginine 11. CTP is bound by residues glycine 8 and arginine 11. Mg(2+) is bound by residues glutamate 21 and aspartate 23. Residues arginine 91, arginine 137, and arginine 140 each coordinate ATP. Residues arginine 91, arginine 137, and arginine 140 each coordinate CTP. Positions 225–326 (TGIHTLKVLE…LKLLNRVDAF (102 aa)) constitute an HD domain.

Belongs to the tRNA nucleotidyltransferase/poly(A) polymerase family. Bacterial CCA-adding enzyme type 1 subfamily. Monomer. Can also form homodimers and oligomers. It depends on Mg(2+) as a cofactor. Ni(2+) is required as a cofactor.

The enzyme catalyses a tRNA precursor + 2 CTP + ATP = a tRNA with a 3' CCA end + 3 diphosphate. It catalyses the reaction a tRNA with a 3' CCA end + 2 CTP + ATP = a tRNA with a 3' CCACCA end + 3 diphosphate. Its function is as follows. Catalyzes the addition and repair of the essential 3'-terminal CCA sequence in tRNAs without using a nucleic acid template. Adds these three nucleotides in the order of C, C, and A to the tRNA nucleotide-73, using CTP and ATP as substrates and producing inorganic pyrophosphate. tRNA 3'-terminal CCA addition is required both for tRNA processing and repair. Also involved in tRNA surveillance by mediating tandem CCA addition to generate a CCACCA at the 3' terminus of unstable tRNAs. While stable tRNAs receive only 3'-terminal CCA, unstable tRNAs are marked with CCACCA and rapidly degraded. In Nitrosococcus oceani (strain ATCC 19707 / BCRC 17464 / JCM 30415 / NCIMB 11848 / C-107), this protein is Multifunctional CCA protein.